A 320-amino-acid polypeptide reads, in one-letter code: Cytochrome f (320 aa).

The N-terminal stretch at 1-35 (MQNRNTFSWVKEEMTRFISVSIMIYVITRTSISNA) is a signal peptide. Tyr36, Cys56, Cys59, and His60 together coordinate heme. A helical transmembrane segment spans residues 286-306 (VQGLLFFLASVILAQIFLVLK).

It belongs to the cytochrome f family. The 4 large subunits of the cytochrome b6-f complex are cytochrome b6, subunit IV (17 kDa polypeptide, petD), cytochrome f and the Rieske protein, while the 4 small subunits are PetG, PetL, PetM and PetN. The complex functions as a dimer. Requires heme as cofactor.

The protein resides in the plastid. It localises to the chloroplast thylakoid membrane. Its function is as follows. Component of the cytochrome b6-f complex, which mediates electron transfer between photosystem II (PSII) and photosystem I (PSI), cyclic electron flow around PSI, and state transitions. This Calycanthus floridus var. glaucus (Eastern sweetshrub) protein is Cytochrome f.